We begin with the raw amino-acid sequence, 155 residues long: uncharacterized protein (155 aa).

The region spanning 4-65 (IDEVDEIILR…IIDHSFLGEF (62 aa)) is the HTH asnC-type domain. The segment at residues 23–42 (LTELSRKVGLTPAAIKNRVE) is a DNA-binding region (H-T-H motif).

This is an uncharacterized protein from Pyrococcus furiosus (strain ATCC 43587 / DSM 3638 / JCM 8422 / Vc1).